Here is a 234-residue protein sequence, read N- to C-terminus: SPX domain-containing protein 6 (234 aa).

In terms of domain architecture, SPX spans 1–137; it reads MKFGKLLKRQ…GGALAAPVAE (137 aa). Residues 202-234 form a disordered region; that stretch reads GSSTHGRHSLPPLTLPDSDWLRSFQPPSPIPIQ.

Predominantly expressed in roots and leaves.

Functionally, may be involved in maintaining cellular Pi homeostasis when plants are exposed to an external change in Pi. This chain is SPX domain-containing protein 6, found in Oryza sativa subsp. japonica (Rice).